The primary structure comprises 177 residues: Large ribosomal subunit protein uL6 (177 aa).

Belongs to the universal ribosomal protein uL6 family. Part of the 50S ribosomal subunit.

In terms of biological role, this protein binds to the 23S rRNA, and is important in its secondary structure. It is located near the subunit interface in the base of the L7/L12 stalk, and near the tRNA binding site of the peptidyltransferase center. This Idiomarina loihiensis (strain ATCC BAA-735 / DSM 15497 / L2-TR) protein is Large ribosomal subunit protein uL6.